The chain runs to 1040 residues: Multidrug resistance protein MdtB (1040 aa).

A run of 12 helical transmembrane segments spans residues 25 to 45 (LLMV…PVAA), 342 to 362 (DTQF…YLFL), 369 to 389 (IIPG…MVFL), 396 to 416 (LTLM…IVVI), 440 to 460 (IGFT…PLLF), 472 to 492 (FAVT…TLTP), 537 to 557 (WLTL…WVFI), 863 to 883 (LGST…VLGV), 888 to 908 (FIHP…ALLA), 911 to 931 (IAGS…IGIV), 967 to 987 (PILM…LSTG), and 998 to 1018 (IGMV…TPVI).

It belongs to the resistance-nodulation-cell division (RND) (TC 2.A.6) family. MdtB subfamily. Part of a tripartite efflux system composed of MdtA, MdtB and MdtC. MdtB forms a heteromultimer with MdtC.

It is found in the cell inner membrane. The sequence is that of Multidrug resistance protein MdtB from Citrobacter koseri (strain ATCC BAA-895 / CDC 4225-83 / SGSC4696).